Here is an 885-residue protein sequence, read N- to C-terminus: Pyruvate, phosphate dikinase (885 aa).

The tract at residues Met-1–Lys-342 is N-terminal. ATP is bound at residue Arg-91. Positions Met-343 to Ser-399 are linker 1. The segment at Pro-400–Ile-497 is central. His-454 serves as the catalytic Tele-phosphohistidine intermediate. Positions Asp-498 to Lys-533 are linker 2. Residues Ile-534–Asn-885 form a C-terminal region. Residues Arg-561, Arg-617, Glu-752, Gly-773, Thr-774, Asn-775, and Asp-776 each contribute to the substrate site. Glu-752 serves as a coordination point for Mg(2+). Asp-776 is a binding site for Mg(2+). Catalysis depends on Cys-839, which acts as the Proton donor.

This sequence belongs to the PEP-utilizing enzyme family. In terms of assembly, homodimer. The cofactor is Mg(2+).

It catalyses the reaction pyruvate + phosphate + ATP = phosphoenolpyruvate + AMP + diphosphate + H(+). Functionally, catalyzes the dephosphorylation of phosphoenolpyruvate and diphosphate to produce ATP. This Entamoeba histolytica (strain ATCC 30459 / HM-1:IMSS / ABRM) protein is Pyruvate, phosphate dikinase.